Here is a 204-residue protein sequence, read N- to C-terminus: Thymidylate kinase (204 aa).

11 to 18 (GLDKSGKT) contacts ATP.

This sequence belongs to the thymidylate kinase family.

The enzyme catalyses dTMP + ATP = dTDP + ADP. It functions in the pathway pyrimidine metabolism; dTTP biosynthesis. This is Thymidylate kinase (TMK) from Vaccinia virus (strain Ankara) (VACV).